Here is a 1331-residue protein sequence, read N- to C-terminus: Alpha,alpha-trehalose-phosphate synthase [UDP-forming] 1 (1331 aa).

Polar residues predominate over residues 1–13; it reads MTDTATGVHSNAN. 3 disordered regions span residues 1 to 50, 71 to 118, and 1312 to 1331; these read MTDT…DNDP, TGKE…SGQL, and PMDQEESSTLGASLGTSFGN. The span at 39-50 shows a compositional bias: basic and acidic residues; sequence DPFDRPKNDNDP. A compositionally biased stretch (acidic residues) spans 77-98; that stretch reads LDESDDMTENEDHDEMANEDDG. Positions 102–112 are enriched in basic and acidic residues; that stretch reads NEKKVETRKMD. Residues 1318 to 1331 are compositionally biased toward polar residues; it reads SSTLGASLGTSFGN.

The protein in the N-terminal section; belongs to the glycosyltransferase 20 family. This sequence in the C-terminal section; belongs to the gob-1 trehalose phosphatase family.

It carries out the reaction D-glucose 6-phosphate + UDP-alpha-D-glucose = alpha,alpha-trehalose 6-phosphate + UDP + H(+). Its function is as follows. Catalyzes the production of trehalose from glucose-6-phosphate and UDP-alpha-D-glucose in a 2 step process. The protein is Alpha,alpha-trehalose-phosphate synthase [UDP-forming] 1 (tps-1) of Caenorhabditis elegans.